Reading from the N-terminus, the 452-residue chain is Cytoplasmic tRNA 2-thiolation protein 2 (452 aa).

Belongs to the CTU2/NCS2 family.

Its subcellular location is the cytoplasm. Its pathway is tRNA modification; 5-methoxycarbonylmethyl-2-thiouridine-tRNA biosynthesis. Functionally, plays a central role in 2-thiolation of mcm(5)S(2)U at tRNA wobble positions of tRNA(Lys), tRNA(Glu) and tRNA(Gln). May act by forming a heterodimer with NCS6 that ligates sulfur from thiocarboxylated URM1 onto the uridine of tRNAs at wobble position. Prior mcm(5) tRNA modification by the elongator complex is required for 2-thiolation. May also be involved in protein urmylation. This chain is Cytoplasmic tRNA 2-thiolation protein 2, found in Candida albicans (strain SC5314 / ATCC MYA-2876) (Yeast).